The primary structure comprises 196 residues: GTP cyclohydrolase 1 (196 aa).

3 residues coordinate Zn(2+): C85, H88, and C156.

It belongs to the GTP cyclohydrolase I family. Toroid-shaped homodecamer, composed of two pentamers of five dimers.

The enzyme catalyses GTP + H2O = 7,8-dihydroneopterin 3'-triphosphate + formate + H(+). It participates in cofactor biosynthesis; 7,8-dihydroneopterin triphosphate biosynthesis; 7,8-dihydroneopterin triphosphate from GTP: step 1/1. In Bacteroides thetaiotaomicron (strain ATCC 29148 / DSM 2079 / JCM 5827 / CCUG 10774 / NCTC 10582 / VPI-5482 / E50), this protein is GTP cyclohydrolase 1.